A 975-amino-acid chain; its full sequence is Aminopeptidase N (975 aa).

At 1-11 (MAKGFYISKAL) the chain is on the cytoplasmic side. The chain crosses the membrane as a helical; Signal-anchor for type II membrane protein span at residues 12–32 (GILAIVLGIAAVSTIIALSVV). Positions 33–74 (YAQEKNKNAESSPVSSPVSSPVSSPVSPTNPSTTAATTLAQS) are cytosolic Ser/Thr-rich junction. Over 33–975 (YAQEKNKNAE…VLQWFRENSQ (943 aa)) the chain is Extracellular. The tract at residues 41–68 (AESSPVSSPVSSPVSSPVSPTNPSTTAA) is disordered. Positions 43 to 59 (SSPVSSPVSSPVSSPVS) are enriched in low complexity. A metalloprotease region spans residues 75-975 (KPWNHYRLPK…VLQWFRENSQ (901 aa)). Asparagine 134 carries N-linked (GlcNAc...) asparagine glycosylation. Tyrosine 182 carries the post-translational modification Sulfotyrosine. Residues asparagine 240 and asparagine 271 are each glycosylated (N-linked (GlcNAc...) asparagine). A substrate-binding site is contributed by 358 to 362 (GAMEN). Position 394 (histidine 394) interacts with Zn(2+). The active-site Proton acceptor is the glutamate 395. Zn(2+) is bound by residues histidine 398 and glutamate 417. Sulfotyrosine is present on residues tyrosine 425 and tyrosine 430. Residues asparagine 533, asparagine 580, asparagine 633, asparagine 689, and asparagine 747 are each glycosylated (N-linked (GlcNAc...) asparagine). 2 cysteine pairs are disulfide-bonded: cysteine 769-cysteine 776 and cysteine 806-cysteine 842. N-linked (GlcNAc...) asparagine glycosylation occurs at asparagine 826.

It belongs to the peptidase M1 family. In terms of assembly, (Microbial infection) Interacts with CCoV spike glycoprotein. Homodimer. Interacts with SLC6A19. Requires Zn(2+) as cofactor. Sulfated. In terms of processing, N- and O-glycosylated. Post-translationally, may undergo proteolysis and give rise to a soluble form.

It is found in the cell membrane. The catalysed reaction is Release of an N-terminal amino acid, Xaa-|-Yaa- from a peptide, amide or arylamide. Xaa is preferably Ala, but may be most amino acids including Pro (slow action). When a terminal hydrophobic residue is followed by a prolyl residue, the two may be released as an intact Xaa-Pro dipeptide.. Functionally, broad specificity aminopeptidase which plays a role in the final digestion of peptides generated from hydrolysis of proteins by gastric and pancreatic proteases. Also involved in the processing of various peptides including peptide hormones, such as angiotensin III and IV, neuropeptides, and chemokines. May also be involved the cleavage of peptides bound to major histocompatibility complex class II molecules of antigen presenting cells. May have a role in angiogenesis and promote cholesterol crystallization. May have a role in amino acid transport by acting as binding partner of amino acid transporter SLC6A19 and regulating its activity. In terms of biological role, (Microbial infection) Probable receptor for canine coronavirus (CCoV). This chain is Aminopeptidase N (ANPEP), found in Canis lupus familiaris (Dog).